Reading from the N-terminus, the 304-residue chain is Putative S-adenosyl-L-methionine-dependent methyltransferase MAV_1058 (304 aa).

S-adenosyl-L-methionine contacts are provided by residues aspartate 128 and 157–158 (DL).

This sequence belongs to the UPF0677 family.

Functionally, exhibits S-adenosyl-L-methionine-dependent methyltransferase activity. In Mycobacterium avium (strain 104), this protein is Putative S-adenosyl-L-methionine-dependent methyltransferase MAV_1058.